Here is a 97-residue protein sequence, read N- to C-terminus: Serine protease inhibitor Kazal-type 13 (97 aa).

A signal peptide spans 1 to 26 (MKRSGCWHQRMLLSLVLLTWTHVTFS). Residue N33 is glycosylated (N-linked (GlcNAc...) asparagine). The region spanning 36-97 (RWPKPPCKMY…IQFVKYGKCE (62 aa)) is the Kazal-like domain. 3 cysteine pairs are disulfide-bonded: C42–C78, C56–C75, and C64–C96.

It is found in the secreted. In terms of biological role, may be a serine protease inhibitor. Essential for sperm maturation and fertility. Inhibits sperm acrosome reaction, protecting sperm from premature reaction. The polypeptide is Serine protease inhibitor Kazal-type 13 (Spink13) (Mus musculus (Mouse)).